The primary structure comprises 154 residues: Small ribosomal subunit protein uS15 (154 aa).

A disordered region spans residues 1 to 23 (MNKKRDKGQSHSTRPARAGPPRW).

Belongs to the universal ribosomal protein uS15 family. Part of the 30S ribosomal subunit.

The protein is Small ribosomal subunit protein uS15 of Staphylothermus marinus (strain ATCC 43588 / DSM 3639 / JCM 9404 / F1).